Consider the following 125-residue polypeptide: Casein kinase I isoform alpha (125 aa).

Residues 1–125 (GEEVAVKLES…LIDFGLAKKY (125 aa)) enclose the Protein kinase domain. K7 lines the ATP pocket. D97 serves as the catalytic Proton acceptor.

The protein belongs to the protein kinase superfamily. CK1 Ser/Thr protein kinase family. Casein kinase I subfamily. Interacts with the Axin complex. Interacts with TUT1, leading to TUT1 phosphorylation. Interacts with FAM83A, FAM83B, FAM83C, FAM83D, FAM83E, FAM83F, FAM83G and FAM83H (via DUF1669). Interaction with FAM83H recruits CSNK1A1 to keratin filaments. Phosphorylated by MTOR in response to mitogenic stimulation, leading to its activation.

It localises to the cytoplasm. The protein localises to the cytoskeleton. It is found in the microtubule organizing center. Its subcellular location is the centrosome. The protein resides in the chromosome. It localises to the centromere. The protein localises to the kinetochore. It is found in the nucleus speckle. Its subcellular location is the cilium basal body. The protein resides in the spindle. The enzyme catalyses L-seryl-[protein] + ATP = O-phospho-L-seryl-[protein] + ADP + H(+). It carries out the reaction L-threonyl-[protein] + ATP = O-phospho-L-threonyl-[protein] + ADP + H(+). Its function is as follows. Casein kinases are operationally defined by their preferential utilization of acidic proteins such as caseins as substrates. It can phosphorylate a large number of proteins. Participates in Wnt signaling. Phosphorylates CTNNB1 at 'Ser-45'. May phosphorylate PER1 and PER2. May play a role in segregating chromosomes during mitosis. May play a role in keratin cytoskeleton disassembly and thereby, it may regulate epithelial cell migration. Acts as a positive regulator of mTORC1 and mTORC2 signaling in response to nutrients by mediating phosphorylation of DEPTOR inhibitor. Acts as an inhibitor of NLRP3 inflammasome assembly by mediating phosphorylation of NLRP3. The protein is Casein kinase I isoform alpha (CSNK1A1) of Sus scrofa (Pig).